Consider the following 317-residue polypeptide: Probable RuBisCO transcriptional regulator (317 aa).

The HTH lysR-type domain maps to 6–63; that stretch reads FTLDQLRILRAILIQGSFKKAATSLYISQPAVSSHVHNIEKQLNIQLFDRSHRNAQLT. The segment at residues 23–42 is a DNA-binding region (H-T-H motif); that stretch reads FKKAATSLYISQPAVSSHVH.

The protein belongs to the LysR transcriptional regulatory family.

It localises to the plastid. Its subcellular location is the chloroplast. Functionally, trans-acting transcriptional regulator of RuBisCO genes (rbcL and rbcS) expression. The protein is Probable RuBisCO transcriptional regulator (rbcR) of Cyanidium caldarium (Red alga).